The sequence spans 1495 residues: Nuclear pore complex protein NUP160 (1495 aa).

As to quaternary structure, part of the nuclear pore complex (NPC). The NPC has an eight-fold symmetrical structure comprising a central transport channel and two rings, the cytoplasmic and nuclear rings, to which eight filaments are attached. The cytoplasmic filaments have loose ends, while the nuclear filaments are joined in a distal ring, forming a nuclear basket. NPCs are highly dynamic in configuration and composition, and can be devided in 3 subcomplexes, the NUP62 subcomplex, the NUP107-160 subcomplex and the NUP93 subcomplex, containing approximately 30 different nucleoporin proteins. Expressed in roots, stems, anthers, siliques and vascular tissues of cotyledons, leaves and hypocotyls.

Its subcellular location is the nucleus membrane. It localises to the nucleus. It is found in the nuclear pore complex. Functionally, contributes to the transfer of mature mRNA from the nucleus to the cytosol. Required for both R gene-mediated and basal disease resistance. RNA export seems to play a critical role in stress responses and regulation of plant growth and development. Required for proper expression of factors associated with auxin signaling. In Arabidopsis thaliana (Mouse-ear cress), this protein is Nuclear pore complex protein NUP160.